The chain runs to 775 residues: Putative late blight resistance protein homolog R1A-3 (775 aa).

Positions 16 to 39 (PRMNEEIVGFEDVIENLRKKLLSE) form a coiled coil. The NB-ARC domain maps to 17 to 237 (RMNEEIVGFE…LSEMEKEVEC (221 aa)). 50–57 (GMPGLGKT) contacts ATP. The 65-residue stretch at 711–775 (IKKMILQFDI…VGKLIDSGML (65 aa)) folds into the HMA domain.

It belongs to the disease resistance NB-LRR family.

Its subcellular location is the cytoplasm. The protein resides in the membrane. Its function is as follows. Confers resistance to late blight (Phytophthora infestans) races carrying the avirulence gene Avr1. Resistance proteins guard the plant against pathogens that contain an appropriate avirulence protein via an indirect interaction with this avirulence protein. That triggers a defense system including the hypersensitive response, which restricts the pathogen growth. The protein is Putative late blight resistance protein homolog R1A-3 (R1A-3) of Solanum demissum (Wild potato).